A 252-amino-acid chain; its full sequence is tRNA pseudouridine synthase A (252 aa).

The Nucleophile role is filled by Asp-54. Substrate is bound at residue Tyr-112.

It belongs to the tRNA pseudouridine synthase TruA family. Homodimer.

It catalyses the reaction uridine(38/39/40) in tRNA = pseudouridine(38/39/40) in tRNA. In terms of biological role, formation of pseudouridine at positions 38, 39 and 40 in the anticodon stem and loop of transfer RNAs. The chain is tRNA pseudouridine synthase A from Oenococcus oeni (strain ATCC BAA-331 / PSU-1).